A 68-amino-acid polypeptide reads, in one-letter code: DNA-directed RNA polymerase subunit omega (68 aa).

Belongs to the RNA polymerase subunit omega family. The RNAP catalytic core consists of 2 alpha, 1 beta, 1 beta' and 1 omega subunit. When a sigma factor is associated with the core the holoenzyme is formed, which can initiate transcription.

The catalysed reaction is RNA(n) + a ribonucleoside 5'-triphosphate = RNA(n+1) + diphosphate. In terms of biological role, promotes RNA polymerase assembly. Latches the N- and C-terminal regions of the beta' subunit thereby facilitating its interaction with the beta and alpha subunits. The sequence is that of DNA-directed RNA polymerase subunit omega from Desulfitobacterium hafniense (strain DSM 10664 / DCB-2).